Reading from the N-terminus, the 254-residue chain is DNA repair protein RecO (254 aa).

This sequence belongs to the RecO family.

Involved in DNA repair and RecF pathway recombination. The polypeptide is DNA repair protein RecO (Verminephrobacter eiseniae (strain EF01-2)).